Consider the following 455-residue polypeptide: 2-succinylbenzoate--CoA ligase (455 aa).

This sequence belongs to the ATP-dependent AMP-binding enzyme family. MenE subfamily.

The enzyme catalyses 2-succinylbenzoate + ATP + CoA = 2-succinylbenzoyl-CoA + AMP + diphosphate. The protein operates within quinol/quinone metabolism; 1,4-dihydroxy-2-naphthoate biosynthesis; 1,4-dihydroxy-2-naphthoate from chorismate: step 5/7. Its pathway is quinol/quinone metabolism; menaquinone biosynthesis. Its function is as follows. Converts 2-succinylbenzoate (OSB) to 2-succinylbenzoyl-CoA (OSB-CoA). The polypeptide is 2-succinylbenzoate--CoA ligase (Salmonella typhimurium (strain LT2 / SGSC1412 / ATCC 700720)).